Consider the following 229-residue polypeptide: ATP synthase subunit a 3 (229 aa).

The next 6 membrane-spanning stretches (helical) occupy residues 25–45, 86–106, 111–131, 142–162, 181–201, and 202–222; these read ADAVSYTWLIIALLLLLSFLA, VATIGIFVLVSNLIGLIPGFF, NINTTAACAIVVFLSTHVVGI, FCGPILWLTPIMFFIEVIGHL, LVLIIFFGLAPFLVPLPMMLM, and GVLVSFIQAFVFMLLTMIYIQ.

It belongs to the ATPase A chain family. In terms of assembly, F-type ATPases have 2 components, CF(1) - the catalytic core - and CF(0) - the membrane proton channel. CF(1) has five subunits: alpha(3), beta(3), gamma(1), delta(1), epsilon(1). CF(0) has three main subunits: a(1), b(2) and c(9-12). The alpha and beta chains form an alternating ring which encloses part of the gamma chain. CF(1) is attached to CF(0) by a central stalk formed by the gamma and epsilon chains, while a peripheral stalk is formed by the delta and b chains.

The protein resides in the cell inner membrane. Its function is as follows. Key component of the proton channel; it plays a direct role in the translocation of protons across the membrane. In Pelobacter propionicus (strain DSM 2379 / NBRC 103807 / OttBd1), this protein is ATP synthase subunit a 3.